Here is a 243-residue protein sequence, read N- to C-terminus: Chromosome partition protein MukE (243 aa).

Residues 214–243 are disordered; it reads DSLALEKQADLNEVDDNDELEDELDDEEHA. Positions 225–243 are enriched in acidic residues; the sequence is NEVDDNDELEDELDDEEHA.

This sequence belongs to the MukE family. Interacts, and probably forms a ternary complex, with MukF and MukB. The complex formation is stimulated by calcium or magnesium.

The protein localises to the cytoplasm. The protein resides in the nucleoid. Its function is as follows. Involved in chromosome condensation, segregation and cell cycle progression. May participate in facilitating chromosome segregation by condensation DNA from both sides of a centrally located replisome during cell division. Probably acts via its interaction with MukB and MukF. The protein is Chromosome partition protein MukE of Pasteurella multocida (strain Pm70).